Reading from the N-terminus, the 1338-residue chain is Phosphoribosylformylglycinamidine synthase (1338 aa).

S215 is modified (phosphoserine). ATP is bound by residues 322–333 (GATTGTGGRIRD) and 402–404 (AGF). S569 is modified (phosphoserine). T619 and T623 each carry phosphothreonine. Position 706 (A706) interacts with ATP. 4 residues coordinate Mg(2+): D707, E746, N750, and D909. Residue S911 coordinates ATP. One can recognise a Glutamine amidotransferase type-1 domain in the interval 1064–1302 (RVAILREEGS…AVMPHPERAV (239 aa)). Catalysis depends on C1158, which acts as the Nucleophile. Residues H1297 and E1299 contribute to the active site.

In the N-terminal section; belongs to the FGAMS family.

The protein localises to the cytoplasm. The enzyme catalyses N(2)-formyl-N(1)-(5-phospho-beta-D-ribosyl)glycinamide + L-glutamine + ATP + H2O = 2-formamido-N(1)-(5-O-phospho-beta-D-ribosyl)acetamidine + L-glutamate + ADP + phosphate + H(+). Its pathway is purine metabolism; IMP biosynthesis via de novo pathway; 5-amino-1-(5-phospho-D-ribosyl)imidazole from N(2)-formyl-N(1)-(5-phospho-D-ribosyl)glycinamide: step 1/2. Its function is as follows. Phosphoribosylformylglycinamidine synthase involved in the purines biosynthetic pathway. Catalyzes the ATP-dependent conversion of formylglycinamide ribonucleotide (FGAR) and glutamine to yield formylglycinamidine ribonucleotide (FGAM) and glutamate. In Homo sapiens (Human), this protein is Phosphoribosylformylglycinamidine synthase (PFAS).